Here is a 106-residue protein sequence, read N- to C-terminus: Insulin-like peptide 04 (106 aa).

The N-terminal stretch at 1–22 (MPRTFLVVLIYILAGFLCSTSA) is a signal peptide. Residues 23-37 (LRKVNEASGIKTDGS) constitute a propeptide that is removed on maturation. Disulfide bonds link Cys-45–Cys-50, Cys-46–Cys-80, and Cys-59–Cys-68. Positions 86 to 106 (RRKRSLTVDKREAKKFIRQRR) are cleaved as a propeptide — c peptide.

The protein belongs to the insulin family.

The protein localises to the secreted. Functionally, insulin decreases blood glucose concentration. May have evolved to activate insulin receptors (INSR) in vertebrates. Molecular docking studies reveals unique interaction with the human insulin receptor. In vivo, insulin-like peptide injection reduces blood glucose levels in two models of zebrafish diabetes (streptozotocin- and glucose-induced). Also shorter swimming distance of zebrafish larvae, an effect which is not observed with human insulin. The protein is Insulin-like peptide 04 of Exaiptasia diaphana (Tropical sea anemone).